A 446-amino-acid chain; its full sequence is tRNA modification GTPase MnmE (446 aa).

(6S)-5-formyl-5,6,7,8-tetrahydrofolate is bound by residues Arg24, Glu81, and Lys120. The TrmE-type G domain maps to 216 to 368 (GLHAVLIGPP…LHTRLRELAL (153 aa)). Asn226 is a K(+) binding site. Residues 226–231 (NAGKSS), 245–251 (TDVAGTT), and 270–273 (DTAG) each bind GTP. Ser230 provides a ligand contact to Mg(2+). K(+) contacts are provided by Thr245, Val247, and Thr250. Position 251 (Thr251) interacts with Mg(2+). Position 446 (Lys446) interacts with (6S)-5-formyl-5,6,7,8-tetrahydrofolate.

It belongs to the TRAFAC class TrmE-Era-EngA-EngB-Septin-like GTPase superfamily. TrmE GTPase family. Homodimer. Heterotetramer of two MnmE and two MnmG subunits. K(+) serves as cofactor.

Its subcellular location is the cytoplasm. In terms of biological role, exhibits a very high intrinsic GTPase hydrolysis rate. Involved in the addition of a carboxymethylaminomethyl (cmnm) group at the wobble position (U34) of certain tRNAs, forming tRNA-cmnm(5)s(2)U34. The protein is tRNA modification GTPase MnmE of Xanthomonas campestris pv. campestris (strain 8004).